The primary structure comprises 64 residues: Large ribosomal subunit protein bL35 (64 aa).

The segment at 1–64 (MPKNKTNSGA…RKSIKKLLGK (64 aa)) is disordered.

Belongs to the bacterial ribosomal protein bL35 family.

In Beutenbergia cavernae (strain ATCC BAA-8 / DSM 12333 / CCUG 43141 / JCM 11478 / NBRC 16432 / NCIMB 13614 / HKI 0122), this protein is Large ribosomal subunit protein bL35.